A 275-amino-acid polypeptide reads, in one-letter code: ADP-dependent (S)-NAD(P)H-hydrate dehydratase (275 aa).

Residues 5 to 273 (TDEILAKVIK…EEIPLFMKKY (269 aa)) enclose the YjeF C-terminal domain. Residues alanine 40, glycine 103, and histidine 151 each contribute to the (6S)-NADPHX site. Glycine 214 is an AMP binding site. Aspartate 215 provides a ligand contact to (6S)-NADPHX.

This sequence belongs to the NnrD/CARKD family. In terms of assembly, homotetramer. Mg(2+) is required as a cofactor.

The catalysed reaction is (6S)-NADHX + ADP = AMP + phosphate + NADH + H(+). It catalyses the reaction (6S)-NADPHX + ADP = AMP + phosphate + NADPH + H(+). Functionally, catalyzes the dehydration of the S-form of NAD(P)HX at the expense of ADP, which is converted to AMP. Together with NAD(P)HX epimerase, which catalyzes the epimerization of the S- and R-forms, the enzyme allows the repair of both epimers of NAD(P)HX, a damaged form of NAD(P)H that is a result of enzymatic or heat-dependent hydration. In Lactococcus lactis subsp. lactis (strain IL1403) (Streptococcus lactis), this protein is ADP-dependent (S)-NAD(P)H-hydrate dehydratase.